Here is a 326-residue protein sequence, read N- to C-terminus: ATP synthase gamma chain (326 aa).

Belongs to the ATPase gamma chain family. In terms of assembly, F-type ATPases have 2 components, CF(1) - the catalytic core - and CF(0) - the membrane proton channel. CF(1) has five subunits: alpha(3), beta(3), gamma(1), delta(1), epsilon(1). CF(0) has three main subunits: a, b and c.

It is found in the cell membrane. Its function is as follows. Produces ATP from ADP in the presence of a proton gradient across the membrane. The gamma chain is believed to be important in regulating ATPase activity and the flow of protons through the CF(0) complex. The polypeptide is ATP synthase gamma chain (Corynebacterium efficiens (strain DSM 44549 / YS-314 / AJ 12310 / JCM 11189 / NBRC 100395)).